A 230-amino-acid chain; its full sequence is Phosphoribosylformylglycinamidine synthase subunit PurQ (230 aa).

Residues 3 to 230 (SAIIVFPGTN…LFQSIVESLS (228 aa)) form the Glutamine amidotransferase type-1 domain. Residue C87 is the Nucleophile of the active site. Residues H204 and E206 contribute to the active site.

Part of the FGAM synthase complex composed of 1 PurL, 1 PurQ and 2 PurS subunits.

Its subcellular location is the cytoplasm. It carries out the reaction N(2)-formyl-N(1)-(5-phospho-beta-D-ribosyl)glycinamide + L-glutamine + ATP + H2O = 2-formamido-N(1)-(5-O-phospho-beta-D-ribosyl)acetamidine + L-glutamate + ADP + phosphate + H(+). The catalysed reaction is L-glutamine + H2O = L-glutamate + NH4(+). It participates in purine metabolism; IMP biosynthesis via de novo pathway; 5-amino-1-(5-phospho-D-ribosyl)imidazole from N(2)-formyl-N(1)-(5-phospho-D-ribosyl)glycinamide: step 1/2. Part of the phosphoribosylformylglycinamidine synthase complex involved in the purines biosynthetic pathway. Catalyzes the ATP-dependent conversion of formylglycinamide ribonucleotide (FGAR) and glutamine to yield formylglycinamidine ribonucleotide (FGAM) and glutamate. The FGAM synthase complex is composed of three subunits. PurQ produces an ammonia molecule by converting glutamine to glutamate. PurL transfers the ammonia molecule to FGAR to form FGAM in an ATP-dependent manner. PurS interacts with PurQ and PurL and is thought to assist in the transfer of the ammonia molecule from PurQ to PurL. The polypeptide is Phosphoribosylformylglycinamidine synthase subunit PurQ (Rhodospirillum rubrum (strain ATCC 11170 / ATH 1.1.1 / DSM 467 / LMG 4362 / NCIMB 8255 / S1)).